Here is a 690-residue protein sequence, read N- to C-terminus: Heterogeneous nuclear ribonucleoprotein M (690 aa).

The segment covering 1–13 (MAAGVEAAAEVAA) has biased composition (low complexity). A disordered region spans residues 1-63 (MAAGVEAAAE…KRGGNRFEPY (63 aa)). Position 2 is an N-acetylalanine (alanine 2). Residue lysine 17 forms a Glycyl lysine isopeptide (Lys-Gly) (interchain with G-Cter in SUMO2) linkage. Phosphoserine is present on serine 29. Residues lysine 37, lysine 68, and lysine 82 each participate in a glycyl lysine isopeptide (Lys-Gly) (interchain with G-Cter in SUMO2) cross-link. Basic and acidic residues predominate over residues 37–49 (KGEERPTQNEKRK). RRM domains are found at residues 70–148 (YRAF…EDPD) and 164–241 (STVF…MDER). Serine 85 bears the Phosphoserine mark. Glycyl lysine isopeptide (Lys-Gly) (interchain with G-Cter in SUMO2) cross-links involve residues lysine 87 and lysine 126. An N6-acetyllysine; alternate modification is found at lysine 133. Lysine 133 is covalently cross-linked (Glycyl lysine isopeptide (Lys-Gly) (interchain with G-Cter in SUMO2); alternate). Glycyl lysine isopeptide (Lys-Gly) (interchain with G-Cter in SUMO2) cross-links involve residues lysine 142 and lysine 144. Residue serine 164 is modified to Phosphoserine. Lysine 181 is covalently cross-linked (Glycyl lysine isopeptide (Lys-Gly) (interchain with G-Cter in SUMO2)). Lysine 237 carries the post-translational modification N6-acetyllysine; alternate. Residue lysine 237 forms a Glycyl lysine isopeptide (Lys-Gly) (interchain with G-Cter in SUMO2); alternate linkage. Glycyl lysine isopeptide (Lys-Gly) (interchain with G-Cter in SUMO2) cross-links involve residues lysine 245 and lysine 305. Phosphoserine is present on residues serine 325 and serine 337. Glycyl lysine isopeptide (Lys-Gly) (interchain with G-Cter in SUMO2) cross-links involve residues lysine 341 and lysine 348. Position 357 is a phosphoserine (serine 357). Tandem repeats lie at residues 360-365 (GIERMG), 367-372 (GIDRIS), 375-380 (GMERMG), and 386-391 (GMDRVG). The segment at 360-568 (GIERMGPGID…ALGAGIERMG (209 aa)) is 27 X 6 AA repeats of [GEVSTPAN]-[ILMV]-[DE]-[RH]-[MLVI]-[GAV]. Serine 392 is modified (phosphoserine). A run of 3 repeats spans residues 393–398 (EIERMG), 400–405 (VMDRMG), and 406–411 (SVERMG). Serine 412 carries the phosphoserine modification. A run of 4 repeats spans residues 413-418 (GIERMG), 421-426 (GLDHMA), 428-433 (SIERMG), and 435-440 (TMERIG). Serine 428 is subject to Phosphoserine. Serine 441 is modified (phosphoserine). 16 repeat units span residues 442 to 447 (GVERMG), 453 to 458 (GLERMA), 460 to 465 (PIDRVG), 467 to 472 (TIERMG), 474 to 479 (GVERMG), 481 to 486 (AIERMG), 488 to 493 (SMDRMV), 500 to 505 (GLERMG), 507 to 512 (VMDRMA), 514 to 519 (GLERMG), 522 to 527 (NLERMG), 528 to 532 (LERMG), 535 to 540 (SLERMG), 541 to 545 (LERMG), 548 to 553 (SLERMG), and 563 to 568 (GIERMG). The residue at position 456 (arginine 456) is an Omega-N-methylarginine. Serine 488 carries the phosphoserine modification. Serine 535 bears the Phosphoserine mark. A Phosphoserine modification is found at serine 548. A phosphoserine mark is found at serine 578, serine 593, and serine 597. Residue lysine 611 forms a Glycyl lysine isopeptide (Lys-Gly) (interchain with G-Cter in SUMO2) linkage. Residues 613–689 (CQIFVRNLPF…REIDVRIDRN (77 aa)) enclose the RRM 3 domain. At threonine 625 the chain carries Phosphothreonine. Lysine 627 participates in a covalent cross-link: Glycyl lysine isopeptide (Lys-Gly) (interchain with G-Cter in SUMO2). Lysine 632 bears the N6-acetyllysine mark. Residues lysine 645 and lysine 652 each participate in a glycyl lysine isopeptide (Lys-Gly) (interchain with G-Cter in SUMO2) cross-link. Lysine 658 bears the N6-acetyllysine; alternate mark. Lysine 658 participates in a covalent cross-link: Glycyl lysine isopeptide (Lys-Gly) (interchain with G-Cter in SUMO2); alternate. Lysine 658 participates in a covalent cross-link: Glycyl lysine isopeptide (Lys-Gly) (interchain with G-Cter in SUMO1); alternate. Serine 661 is subject to Phosphoserine. Residue lysine 676 forms a Glycyl lysine isopeptide (Lys-Gly) (interchain with G-Cter in SUMO2) linkage.

Identified in the spliceosome C complex. Interacts with PPIA/CYPA. Sumoylated. As to expression, expressed in all tissues tested, including liver, heart, lung, skeletal muscle, kidney, stomach, large intestine, small intestine, pancreas, spleen, peritoneal macrophage and thyroid.

Its subcellular location is the nucleus matrix. Pre-mRNA binding protein, binds avidly to poly(G) and poly(U) RNA homopolymers. Involved in splicing. Acts as a receptor for carcinoembryonic antigen in Kupffer cells, may initiate a series of signaling events leading to tyrosine phosphorylation of proteins and induction of IL-1 alpha, IL-6, IL-10 and tumor necrosis factor alpha cytokines. The polypeptide is Heterogeneous nuclear ribonucleoprotein M (Hnrnpm) (Rattus norvegicus (Rat)).